The chain runs to 463 residues: Adenosylhomocysteinase (463 aa).

Positions 54, 128, and 189 each coordinate substrate. 190–192 (TTT) contacts NAD(+). Residues Lys-219 and Asp-223 each contribute to the substrate site. NAD(+)-binding positions include Asn-224, 253–258 (GYGDVG), Glu-276, Asn-311, 332–334 (IGH), and Asn-377.

This sequence belongs to the adenosylhomocysteinase family. NAD(+) is required as a cofactor.

It localises to the cytoplasm. The enzyme catalyses S-adenosyl-L-homocysteine + H2O = L-homocysteine + adenosine. The protein operates within amino-acid biosynthesis; L-homocysteine biosynthesis; L-homocysteine from S-adenosyl-L-homocysteine: step 1/1. In terms of biological role, may play a key role in the regulation of the intracellular concentration of adenosylhomocysteine. This chain is Adenosylhomocysteinase, found in Cereibacter sphaeroides (Rhodobacter sphaeroides).